Consider the following 350-residue polypeptide: Renin receptor (350 aa).

An N-terminal signal peptide occupies residues 1–17; that stretch reads MAVLVVLLSSLVSSALA. Over 18-302 the chain is Extracellular; that stretch reads NEFSILRSPG…YNLAYKYNLE (285 aa). The helical transmembrane segment at 303–323 threads the bilayer; the sequence is YSVVFNLVLWIMTGLALAVII. At 324 to 350 the chain is on the cytoplasmic side; sequence TSYNIWNMDPGYDSIIYRMTNQKIRMD. Positions 346 to 350 match the Mediates retrograde transport to the ER motif; sequence KIRMD.

In terms of assembly, interacts with renin. Accessory component of the multisubunit proton-transporting vacuolar (V)-ATPase protein pump. Interacts (via N-terminus) with ATP6AP1 (via N-terminus). Interacts with ATP6V0D1; ATP6V0D1 is a V-ATPase complex subunit and the interaction promotes V-ATPase complex assembly. Interacts with TMEM9; TMEM9 is a V-ATPase assembly regulator and the interaction induces the interaction with ATP6V0D1. Interacts with VMA21 (via N-terminus); VMA21 is a V-ATPase accessory component. Post-translationally, phosphorylated. In terms of processing, proteolytically cleaved by a furin-like convertase in the trans-Golgi network to generate N- and C-terminal fragments. As to expression, expressed in the brain.

The protein localises to the endoplasmic reticulum membrane. It localises to the lysosome membrane. Its subcellular location is the cytoplasmic vesicle. The protein resides in the autophagosome membrane. It is found in the cell projection. The protein localises to the dendritic spine membrane. It localises to the axon. Its subcellular location is the endosome membrane. The protein resides in the clathrin-coated vesicle membrane. It is found in the secretory vesicle. The protein localises to the synaptic vesicle membrane. Its function is as follows. Multifunctional protein which functions as a renin, prorenin cellular receptor and is involved in the assembly of the lysosomal proton-transporting V-type ATPase (V-ATPase) and the acidification of the endo-lysosomal system. May mediate renin-dependent cellular responses by activating ERK1 and ERK2. By increasing the catalytic efficiency of renin in AGT/angiotensinogen conversion to angiotensin I, may also play a role in the renin-angiotensin system (RAS). Through its function in V-type ATPase (v-ATPase) assembly and acidification of the lysosome it regulates protein degradation and may control different signaling pathways important for proper brain development, synapse morphology and synaptic transmission. The chain is Renin receptor (Atp6ap2) from Rattus norvegicus (Rat).